The chain runs to 447 residues: Argininosuccinate lyase (447 aa).

This sequence belongs to the lyase 1 family. Argininosuccinate lyase subfamily.

It is found in the cytoplasm. It carries out the reaction 2-(N(omega)-L-arginino)succinate = fumarate + L-arginine. The protein operates within amino-acid biosynthesis; L-arginine biosynthesis; L-arginine from L-ornithine and carbamoyl phosphate: step 3/3. The protein is Argininosuccinate lyase of Bacteroides fragilis (strain YCH46).